Here is a 279-residue protein sequence, read N- to C-terminus: Ribosomal RNA small subunit methyltransferase J (279 aa).

S-adenosyl-L-methionine is bound by residues 138–139 and Asp-194; that span reads ER.

Belongs to the methyltransferase superfamily. RsmJ family.

The protein localises to the cytoplasm. The enzyme catalyses guanosine(1516) in 16S rRNA + S-adenosyl-L-methionine = N(2)-methylguanosine(1516) in 16S rRNA + S-adenosyl-L-homocysteine + H(+). Specifically methylates the guanosine in position 1516 of 16S rRNA. The protein is Ribosomal RNA small subunit methyltransferase J of Acinetobacter baumannii (strain AYE).